The primary structure comprises 347 residues: DNA-directed RNA polymerase subunit alpha (347 aa).

The tract at residues 1–243 (MLIKQGDRLI…DQISVFINFD (243 aa)) is alpha N-terminal domain (alpha-NTD). Residues 260–347 (VNENLFKGID…EWKRKQQNEA (88 aa)) are alpha C-terminal domain (alpha-CTD).

It belongs to the RNA polymerase alpha chain family. Homodimer. The RNAP catalytic core consists of 2 alpha, 1 beta, 1 beta' and 1 omega subunit. When a sigma factor is associated with the core the holoenzyme is formed, which can initiate transcription.

It catalyses the reaction RNA(n) + a ribonucleoside 5'-triphosphate = RNA(n+1) + diphosphate. Functionally, DNA-dependent RNA polymerase catalyzes the transcription of DNA into RNA using the four ribonucleoside triphosphates as substrates. The polypeptide is DNA-directed RNA polymerase subunit alpha (Nitratidesulfovibrio vulgaris (strain DSM 19637 / Miyazaki F) (Desulfovibrio vulgaris)).